The primary structure comprises 653 residues: UvrABC system protein C (653 aa).

One can recognise a GIY-YIG domain in the interval 44 to 122 (NAPGVYRMVN…IKRLRPRFNV (79 aa)). One can recognise a UVR domain in the interval 232 to 267 (STVKAEIATAMQEASQALDFERAAIYRDRLAALSHV).

The protein belongs to the UvrC family. In terms of assembly, interacts with UvrB in an incision complex.

It is found in the cytoplasm. The UvrABC repair system catalyzes the recognition and processing of DNA lesions. UvrC both incises the 5' and 3' sides of the lesion. The N-terminal half is responsible for the 3' incision and the C-terminal half is responsible for the 5' incision. The protein is UvrABC system protein C of Chelativorans sp. (strain BNC1).